Reading from the N-terminus, the 877-residue chain is MNEKYAALRANVGMLGQLLGKSIKDHQGQAFLDKIETIRQLAKSSRKGNEADRERLLETLRTLSDDELLPVARAFSQFLNLANVAEQFHTISRRCEEQVCTPDPLEQMFAKLKASNLSQEAIIQAVRELDIDLVLTAHPTEVTRRTLIHKHVQLNDCLEALELSDLLPRERDKILNRIEQLVNQAWHTNEIREQRPTPVDEAKWGFAVVENSLWPAIPEFMRNLDERLQQHLGVRLPLDAAPVKFTSWMGGDRDGNPFVTAKVTAEVLELGRWMAVSLFYKDIKELTSELSMSDCTDAVRERVGDHPEPYRALVRELREALRETQEYLTAKVQGQVSESRDLITTTAQLREPLELCYHSMHACGMGNIADGMLLDVLRKLACFGIHLVKLDIRQDGERHGQVFSELTRYLGMGDYAEWSEDDKQAFLLNELNSRRPLIPTDWEPSDETRETIDTCRVIAQHDPDAFGIYIISMAGAPSDVLAVQLLLKEAGCKFRMPVAPLFETQEDLMAGTAVMERLLSVDWYRGYIQGRQYVMIGYSDSAKDAGMMAAGWAQYAAMESLVALAEASNLRLTLFHGRGGTVGRGGAPAHQAILSQPPGSLRGGLRVTEQGEMIRFKFGLPKVAIHSLNLYTSAVLEGNLLPPPKPKESWRAVMEQLATVSCDHYRSIVRGHPDFVPYFRAATPEMELGKLPLGSRPAKRKPNGGVESLRAIPWIFAWTQNRLMLPAWLGAHKGLEHAITDGQKSVLEEMSRQWPFFRTRLEMLEMVFLKADLWLAEYYDTRLVPQELWNLGKQLRQELADAIQIVLQLRPQGDLLDDQPWIKESINLRNPYTDPLNVLQVELLGRSRSHTETLHPELDQALMVTIAGIAAGMRNTG.

Catalysis depends on residues His138 and Lys543.

This sequence belongs to the PEPCase type 1 family. It depends on Mg(2+) as a cofactor.

The enzyme catalyses oxaloacetate + phosphate = phosphoenolpyruvate + hydrogencarbonate. Its function is as follows. Forms oxaloacetate, a four-carbon dicarboxylic acid source for the tricarboxylic acid cycle. The protein is Phosphoenolpyruvate carboxylase of Aeromonas salmonicida (strain A449).